Consider the following 218-residue polypeptide: Glutathione S-transferase Mu 2 (218 aa).

Residues 2–88 form the GST N-terminal domain; that stretch reads PMTLGYWNIR…YIARKHNLCG (87 aa). Residue 7–8 participates in glutathione binding; that stretch reads YW. A phosphoserine mark is found at S27 and S44. Glutathione contacts are provided by residues 43 to 46, K50, 59 to 60, and 72 to 73; these read RSQW, NL, and QS. A GST C-terminal domain is found at 90–208; that stretch reads SEKEQIREDI…KSSRFLPRPV (119 aa). Y116 is a binding site for substrate.

It belongs to the GST superfamily. Mu family. In terms of assembly, homodimer. In terms of tissue distribution, muscle.

Its subcellular location is the cytoplasm. The catalysed reaction is RX + glutathione = an S-substituted glutathione + a halide anion + H(+). It carries out the reaction 11(S)-hydroxy-14(S),15(S)-epoxy-(5Z,8Z,12E)-eicosatrienoate + glutathione = (11S,15S)-dihydroxy-14(R)-S-glutathionyl-(5Z,8Z,12E)-eicosatrienoate. Conjugation of reduced glutathione to a wide number of exogenous and endogenous hydrophobic electrophiles. Participates in the formation of novel hepoxilin regioisomers. The chain is Glutathione S-transferase Mu 2 from Homo sapiens (Human).